Consider the following 130-residue polypeptide: UPF0212 protein PF1486 (130 aa).

The protein belongs to the UPF0212 family.

The polypeptide is UPF0212 protein PF1486 (Pyrococcus furiosus (strain ATCC 43587 / DSM 3638 / JCM 8422 / Vc1)).